A 291-amino-acid polypeptide reads, in one-letter code: Pre-mRNA-splicing factor SPP381 (291 aa).

2 disordered regions span residues 1–99 (MSFR…PLPR) and 239–266 (EKEK…YKIT). 2 stretches are compositionally biased toward polar residues: residues 28-41 (QNVS…SLSH) and 52-62 (TGKNRTPNDGQ). Over residues 63 to 91 (ESNESDGSPESDESPESEESSDNSDSSDS) the composition is skewed to acidic residues. Over residues 239–258 (EKEKLDHKKQRSAEKVEKSH) the composition is skewed to basic and acidic residues.

Belongs to the SPP381 family. Component of the U4/U6-U5 tri-snRNP complex composed of the U4, U6 and U5 snRNAs and at least PRP3, PRP4, PRP6, PRP8, PRP18, PRP31, PRP38, SNU13, SNU23, SNU66, SNU114, SPP381, SMB1, SMD1, SMD2, SMD3, SMX2, SMX3, LSM2, LSM3, LSM4, LSM5, LSM6, LSM7, LSM8, BRR2 and DIB1. Interacts with PRP38.

Its subcellular location is the nucleus. Functionally, component of the spliceosome and rRNA processing machinery. In association with the spliceosomal U4/U6.U5 tri-snRNP particle, required for splicing of pre-mRNA. This is Pre-mRNA-splicing factor SPP381 (SPP381) from Saccharomyces cerevisiae (strain ATCC 204508 / S288c) (Baker's yeast).